Reading from the N-terminus, the 411-residue chain is Cytochrome P450 monooxygenase sirE (411 aa).

N-linked (GlcNAc...) asparagine glycans are attached at residues asparagine 12 and asparagine 149. The helical transmembrane segment at 181–203 (FLNVISIFTVMMASLNVLYDILA) threads the bilayer. N-linked (GlcNAc...) asparagine glycosylation occurs at asparagine 342. Cysteine 352 contacts heme.

The protein belongs to the cytochrome P450 family. Heme serves as cofactor.

The protein resides in the membrane. It functions in the pathway mycotoxin biosynthesis. Its function is as follows. Cytochrome P450 monooxygenase; part of the gene cluster that mediates the biosynthesis of sirodesmin PL, an epipolythiodioxopiperazine (ETP) characterized by a disulfide bridged cyclic dipeptide and that acts as a phytotoxin which is involved in the blackleg didease of canola. SirD catalyzes the O-prenylation of L-tyrosine (L-Tyr) in the presence of dimethylallyl diphosphate (DMAPP) to yield 4-O-dimethylallyl-L-Tyr, and therefore represents probably the first pathway-specific enzyme in the biosynthesis of sirodesmin PL. 4-O-dimethylallyl-L-Tyr, then undergoes condensation with L-Ser in a reaction catalyzed by the non-ribosomal peptide synthase sirP to form the diketopiperazine (DKP) backbone. Further bishydroxylation of the DKP performed by the cytochrome P450 monooxygenase sirC leads to the production of the intermediate phomamide. This step is essential to form the reactive thiol group required for toxicity of sirodesmin PL. The next steps of sirodesmin biosynthesis are not well understood yet, but some predictions could be made from intermediate compounds identification. Phomamide is converted into phomalizarine via oxidation, probably by sirT. Further oxidation, methylation (by sirM or sirN) and reduction steps convert phomalizarine to deacetyl sirodesmin. Finally, acetyltransferase sirH probably acetylates deacetyl sirodesmin to produce sirodesmin PL. In Leptosphaeria maculans (Blackleg fungus), this protein is Cytochrome P450 monooxygenase sirE.